A 210-amino-acid polypeptide reads, in one-letter code: Thymidylate kinase (210 aa).

Residue 10 to 17 participates in ATP binding; the sequence is GGEGAGKS.

Belongs to the thymidylate kinase family.

The catalysed reaction is dTMP + ATP = dTDP + ADP. In terms of biological role, phosphorylation of dTMP to form dTDP in both de novo and salvage pathways of dTTP synthesis. The sequence is that of Thymidylate kinase from Magnetococcus marinus (strain ATCC BAA-1437 / JCM 17883 / MC-1).